The sequence spans 490 residues: Histone-lysine N-methyltransferase Smyd1 (490 aa).

The region spanning 7–253 (ENVEVFTSEG…EGEELTVSYI (247 aa)) is the SET domain. 17-19 (KGR) contacts S-adenosyl-L-methionine. Cysteine 52, cysteine 55, cysteine 65, cysteine 68, cysteine 74, cysteine 78, histidine 86, and cysteine 90 together coordinate Zn(2+). Residues 52-90 (CHTCFKRQEKLHRCGQCKFAHYCDRTCQKDAWLNHKNEC) form an MYND-type zinc finger. S-adenosyl-L-methionine is bound by residues histidine 135 and 205-206 (NH). Cysteine 208 serves as a coordination point for Zn(2+). An S-adenosyl-L-methionine-binding site is contributed by 270–272 (YYF). The Zn(2+) site is built by cysteine 274, cysteine 276, and cysteine 279.

It belongs to the class V-like SAM-binding methyltransferase superfamily. As to quaternary structure, interacts with HDAC1, HDAC2 and HDAC3. Interacts (via MYND-type zinc finger) with NACA isoform skNAC. Expressed in cardiac and skeletal muscle, lymphocytes and thymus.

It localises to the cytoplasm. Its subcellular location is the nucleus. It catalyses the reaction L-lysyl(4)-[histone H3] + 3 S-adenosyl-L-methionine = N(6),N(6),N(6)-trimethyl-L-lysyl(4)-[histone H3] + 3 S-adenosyl-L-homocysteine + 3 H(+). Methylates histone H3 at 'Lys-4' (H3K4me). Acts as a transcriptional repressor. Essential for cardiomyocyte differentiation and cardiac morphogenesis. The protein is Histone-lysine N-methyltransferase Smyd1 (Smyd1) of Mus musculus (Mouse).